Consider the following 101-residue polypeptide: Small ribosomal subunit protein uS14 (101 aa).

The protein belongs to the universal ribosomal protein uS14 family. In terms of assembly, part of the 30S ribosomal subunit. Contacts proteins S3 and S10.

Its function is as follows. Binds 16S rRNA, required for the assembly of 30S particles and may also be responsible for determining the conformation of the 16S rRNA at the A site. The polypeptide is Small ribosomal subunit protein uS14 (Chromobacterium violaceum (strain ATCC 12472 / DSM 30191 / JCM 1249 / CCUG 213 / NBRC 12614 / NCIMB 9131 / NCTC 9757 / MK)).